The primary structure comprises 1441 residues: Envelopment polyprotein (1441 aa).

The N-terminal stretch at 1–13 (MIRMLVLIVVTAA) is a signal peptide. Residues 14-200 (SPVYQRCFQD…GSIANSICQN (187 aa)) are Lumenal-facing. N-linked (GlcNAc...) asparagine; by host glycosylation occurs at Asn57. The helical transmembrane segment at 201–221 (IEIIILVTLTLLIFILLSILS) threads the bilayer. Residues 222-305 (KTYICYLLMP…RAARVMCKSK (84 aa)) are Cytoplasmic-facing. The chain crosses the membrane as a helical span at residues 306–326 (GPASILSIITAVLVLTFVTPI). The Lumenal segment spans residues 327 to 365 (NSMVLGESKETFELEELPDDMLEMALRINSYYFTCILNY). A helical transmembrane segment spans residues 366–386 (AVSWGLIIAGLLVGLIFKKYQ). The Cytoplasmic segment spans residues 387–452 (HRFLNIYAMY…LVQYKAKWMM (66 aa)). The chain crosses the membrane as a helical span at residues 453 to 473 (NFLIIYIFLILIKDSAIVGQA). At 474-1395 (TGTDFTTCLE…EPFKNLFGSY (922 aa)) the chain is on the lumenal side. Residues Asn490 and Asn1177 are each glycosylated (N-linked (GlcNAc...) asparagine; by host). A helical membrane pass occupies residues 1396 to 1416 (IGIFYTFIISIIALLVIIYVL). Topologically, residues 1417-1441 (LPICFKLRDTLRKHDDAYKREMKIR) are cytoplasmic.

Belongs to the orthobunyavirus envelope glycoprotein family. In terms of assembly, glycoprotein C and Glycoprotein N interact with each other. In terms of processing, specific enzymatic cleavages in vivo yield mature proteins including nonstructural protein NSm, glycoprotein C, and glycoprotein N.

The protein localises to the virion membrane. Its subcellular location is the host Golgi apparatus membrane. The protein resides in the host endoplasmic reticulum membrane. Glycoprotein C and Glycoprotein N interact with each other and are present at the surface of the virion. They are able to attach the virion to a cell receptor and to promote fusion of membranes after endocytosis of the virion. The protein is Envelopment polyprotein (GP) of Bunyavirus La Crosse.